A 310-amino-acid chain; its full sequence is Small ribosomal subunit protein uS2 (310 aa).

Disordered regions lie at residues 213 to 240 (EEQAALARQQEEANAGTTAGFSEWGGAA) and 271 to 310 (WDSVAPGATDDWGAEPAAPSSDWGTAVTMQEQAKPSTDWA). The segment covering 216–227 (AALARQQEEANA) has biased composition (low complexity). Over residues 297-310 (VTMQEQAKPSTDWA) the composition is skewed to polar residues.

Belongs to the universal ribosomal protein uS2 family. As to quaternary structure, component of the small ribosomal subunit. Mature ribosomes consist of a small (40S) and a large (60S) subunit. The 40S subunit contains about 33 different proteins and 1 molecule of RNA (18S). The 60S subunit contains about 49 different proteins and 3 molecules of RNA (28S, 5.8S and 5S). Interacts with ribosomal protein S21.

Its subcellular location is the cytoplasm. Functionally, required for the assembly and/or stability of the 40S ribosomal subunit. Required for the processing of the 20S rRNA-precursor to mature 18S rRNA in a late step of the maturation of 40S ribosomal subunits. This is Small ribosomal subunit protein uS2 from Nematostella vectensis (Starlet sea anemone).